A 120-amino-acid polypeptide reads, in one-letter code: Chaperonin GroEL (120 aa).

Position 23-27 (23-27) interacts with ATP; that stretch reads DGTTT.

This sequence belongs to the chaperonin (HSP60) family. As to quaternary structure, forms a cylinder of 14 subunits composed of two heptameric rings stacked back-to-back. Interacts with the co-chaperonin GroES.

It localises to the cytoplasm. It catalyses the reaction ATP + H2O + a folded polypeptide = ADP + phosphate + an unfolded polypeptide.. In terms of biological role, together with its co-chaperonin GroES, plays an essential role in assisting protein folding. The GroEL-GroES system forms a nano-cage that allows encapsulation of the non-native substrate proteins and provides a physical environment optimized to promote and accelerate protein folding. The polypeptide is Chaperonin GroEL (Mycolicibacterium vaccae (Mycobacterium vaccae)).